A 233-amino-acid chain; its full sequence is MADS-box transcription factor 20 (233 aa).

The MADS-box domain occupies 1–61 (MGRGKVQVRR…GNLFHYASSH (61 aa)). Residues 91–184 (EGSMSYDHIK…PTKAAAPPAC (94 aa)) enclose the K-box domain.

As to expression, expressed in developing seeds and seedling shoots.

The protein resides in the nucleus. Its function is as follows. Probable transcription factor. This Oryza sativa subsp. japonica (Rice) protein is MADS-box transcription factor 20 (MADS20).